A 517-amino-acid polypeptide reads, in one-letter code: ATP synthase subunit alpha (517 aa).

175–182 (GDRQTGKT) lines the ATP pocket.

This sequence belongs to the ATPase alpha/beta chains family. F-type ATPases have 2 components, CF(1) - the catalytic core - and CF(0) - the membrane proton channel. CF(1) has five subunits: alpha(3), beta(3), gamma(1), delta(1), epsilon(1). CF(0) has three main subunits: a(1), b(2) and c(9-12). The alpha and beta chains form an alternating ring which encloses part of the gamma chain. CF(1) is attached to CF(0) by a central stalk formed by the gamma and epsilon chains, while a peripheral stalk is formed by the delta and b chains.

Its subcellular location is the cell membrane. It catalyses the reaction ATP + H2O + 4 H(+)(in) = ADP + phosphate + 5 H(+)(out). Its function is as follows. Produces ATP from ADP in the presence of a proton gradient across the membrane. The alpha chain is a regulatory subunit. This Herpetosiphon aurantiacus (strain ATCC 23779 / DSM 785 / 114-95) protein is ATP synthase subunit alpha.